The following is a 488-amino-acid chain: Acetyl-CoA decarbonylase/synthase complex subunit gamma (488 aa).

The 4Fe-4S domain maps to 1–61 (MPKKISAMDI…FEKNKKKIIE (61 aa)). The [4Fe-4S] cluster site is built by Cys-19, Cys-22, Cys-27, and Cys-44.

As to quaternary structure, heterodimer of delta and gamma chains. The ACDS complex is made up of alpha, epsilon, beta, gamma and delta chains with a probable stoichiometry of (alpha(2)epsilon(2))(4)-beta(8)-(gamma(1)delta(1))(8). Corrinoid serves as cofactor. The cofactor is [4Fe-4S] cluster.

The enzyme catalyses 5,6,7,8-tetrahydrosarcinapterin + methyl-Co(III)-[corrinoid Fe-S protein] = 5-methyltetrahydrosarcinapterin + Co(I)-[corrinoid Fe-S protein] + H(+). In terms of biological role, part of a complex that catalyzes the reversible cleavage of acetyl-CoA, allowing autotrophic growth from CO(2). The sequence is that of Acetyl-CoA decarbonylase/synthase complex subunit gamma from Methanocaldococcus jannaschii (strain ATCC 43067 / DSM 2661 / JAL-1 / JCM 10045 / NBRC 100440) (Methanococcus jannaschii).